The sequence spans 352 residues: Galactokinase (352 aa).

14 to 17 (EHTD) provides a ligand contact to substrate. ATP-binding positions include serine 46 and 96 to 102 (GAGLSSS). Serine 102 and glutamate 134 together coordinate Mg(2+). The Proton acceptor role is filled by aspartate 146. Tyrosine 196 provides a ligand contact to substrate.

Belongs to the GHMP kinase family. GalK subfamily.

The protein localises to the cytoplasm. It carries out the reaction alpha-D-galactose + ATP = alpha-D-galactose 1-phosphate + ADP + H(+). It functions in the pathway carbohydrate metabolism; galactose metabolism. Catalyzes the transfer of the gamma-phosphate of ATP to D-galactose to form alpha-D-galactose-1-phosphate (Gal-1-P). This Thermosipho africanus (strain TCF52B) protein is Galactokinase.